The sequence spans 103 residues: Truncated secreted TNF-receptor-like protein A53 (103 aa).

The TNFR-Cys 1 repeat unit spans residues S36–E73. 3 disulfides stabilise this stretch: C37-C50, C51-C64, and C54-C72. The TNFR-Cys 2; truncated repeat unit spans residues R74–R103.

The protein belongs to the poxviridae A53R protein family.

The protein is Truncated secreted TNF-receptor-like protein A53 of Vaccinia virus (strain Copenhagen) (VACV).